Here is a 700-residue protein sequence, read N- to C-terminus: Sex comb on midleg-like protein 2 (700 aa).

Residues 1 to 33 form a disordered region; that stretch reads MGQTVNEDSMDVKKENQEKTPQSSTSSVQRDDF. Polar residues predominate over residues 19–28; that stretch reads KTPQSSTSSV. MBT repeat units follow at residues 33-131 and 139-240; these read FHWE…LQPP and SSWP…LQPP. Positions 253–281 are enriched in polar residues; it reads TESSPSEASQHSMQSPQKTTLILPTQQVR. 2 disordered regions span residues 253 to 320 and 466 to 550; these read TESS…EKPL and PFSS…SSLN. Ser-256, Ser-261, Ser-267, Ser-299, and Ser-300 each carry phosphoserine. Phosphothreonine is present on Thr-305. A compositionally biased stretch (basic and acidic residues) spans 476-495; that stretch reads SSAEHDKNQSAKEDVTERQS. At Ser-499 the chain carries Phosphoserine. Thr-503 carries the phosphothreonine modification. Ser-511 bears the Phosphoserine mark. Lys-518 participates in a covalent cross-link: Glycyl lysine isopeptide (Lys-Gly) (interchain with G-Cter in SUMO2). The residue at position 522 (Ser-522) is a Phosphoserine. Basic and acidic residues predominate over residues 535 to 545; it reads PKEENLSEDSK. Lys-536 participates in a covalent cross-link: Glycyl lysine isopeptide (Lys-Gly) (interchain with G-Cter in SUMO2). 4 positions are modified to phosphoserine: Ser-570, Ser-583, Ser-590, and Ser-594. A compositionally biased stretch (polar residues) spans 575 to 584; it reads RSVPGTTSSP. The tract at residues 575-594 is disordered; that stretch reads RSVPGTTSSPLVGDISPKSS. Residues Lys-599 and Lys-605 each participate in a glycyl lysine isopeptide (Lys-Gly) (interchain with G-Cter in SUMO2) cross-link. The 70-residue stretch at 631-700 folds into the SAM domain; the sequence is WSVDEVIQFM…IEKLKEGKYS (70 aa).

Belongs to the SCM family. In terms of tissue distribution, highly expressed in placenta, thymus and testis. Detected at lower levels in brain, liver, skeletal muscle, pancreas and ovary.

Its subcellular location is the nucleus. Functionally, putative Polycomb group (PcG) protein. PcG proteins act by forming multiprotein complexes, which are required to maintain the transcriptionally repressive state of homeotic genes throughout development. This is Sex comb on midleg-like protein 2 (SCML2) from Homo sapiens (Human).